The chain runs to 756 residues: Pro-neuregulin-2, membrane-bound isoform (756 aa).

Residues 1 to 19 (MRRDPAPGFSMLLFGVSLA) constitute a propeptide that is removed on maturation. At 20 to 315 (CYSPSLKSVQ…KEAEELYQKR (296 aa)) the chain is on the extracellular side. N-linked (GlcNAc...) asparagine glycosylation is found at Asn55, Asn186, and Asn254. The Ig-like C2-type domain maps to 145 to 240 (PKLKKMKSQT…RGRLHVNSVS (96 aa)). Cystine bridges form between Cys165–Cys219, Cys253–Cys267, Cys261–Cys278, and Cys280–Cys289. One can recognise an EGF-like domain in the interval 249–290 (HARKCNETAKSYCVNGGVCYYIEGINQLSCKCPVGYTGDRCQ). Asn296 carries an N-linked (GlcNAc...) asparagine glycan. A helical transmembrane segment spans residues 316–336 (VLTITGICVALLVVGIVCVVA). At 337–756 (YCKTKKQRRQ…TRAKQDSGPL (420 aa)) the chain is on the cytoplasmic side. Disordered regions lie at residues 402-439 (TFSG…SESL), 557-578 (LLRH…DMQR), 608-694 (ASPF…DGAL), and 711-756 (LRSD…SGPL). A compositionally biased stretch (low complexity) spans 404-416 (SGSHSCSPSHHCS). Positions 424–437 (HRHESHTWSLERSE) are enriched in basic and acidic residues. Positions 654–682 (LNGLAAQRARAARDSLSLSSGSGCGSASA) are enriched in low complexity.

Belongs to the neuregulin family. As to quaternary structure, interacts with ERBB3 and ERBB4. Post-translationally, proteolytic cleavage close to the plasma membrane on the external face leads to the release of the soluble growth factor form. Extensive glycosylation precedes the proteolytic cleavage. Highest expression in the brain, with lower levels in the lung. In the cerebellum, found in granule and Purkinje cells.

It is found in the cell membrane. The protein localises to the secreted. In terms of biological role, direct ligand for ERBB3 and ERBB4 tyrosine kinase receptors. Concomitantly recruits ERBB1 and ERBB2 coreceptors, resulting in ligand-stimulated tyrosine phosphorylation and activation of the ERBB receptors. May also promote the heterodimerization with the EGF receptor. The sequence is that of Pro-neuregulin-2, membrane-bound isoform (Nrg2) from Mus musculus (Mouse).